The chain runs to 108 residues: UPF0060 membrane protein KPK_2870 (108 aa).

4 helical membrane passes run 6–26 (LLFFATALCEIIGCYLPWLWL), 29–49 (GATPLLLIPTGLALALFVWLL), 61–81 (AAYGGVYVCTALLWLRVVDGV), and 86–106 (YDWAGAIIALCGMLIIVAGWG).

The protein belongs to the UPF0060 family.

The protein resides in the cell inner membrane. The polypeptide is UPF0060 membrane protein KPK_2870 (Klebsiella pneumoniae (strain 342)).